We begin with the raw amino-acid sequence, 164 residues long: Elicitin-like protein 2 (164 aa).

Positions 1 to 22 (MFSKTLVVLAAVAAVTVNGLTA) are cleaved as a signal peptide. 3 disulfide bridges follow: Cys-25-Cys-91, Cys-47-Cys-76, and Cys-71-Cys-118. A disordered region spans residues 121-164 (ISGGGSTPTTAPPSGTTPTTPTTAPPTGTTPGVTPSPTTPKPAC). Residues 127 to 156 (TPTTAPPSGTTPTTPTTAPPTGTTPGVTPS) show a composition bias toward low complexity.

The protein belongs to the elicitin family.

It localises to the secreted. Induces local and distal defense responses (incompatible hypersensitive reaction) in plants from the solanaceae and cruciferae families. Elicits leaf necrosis and causes the accumulation of pathogenesis-related proteins. Might interact with the lipidic molecules of the plasma membrane. The protein is Elicitin-like protein 2 (POD-2) of Pythium oligandrum (Mycoparasitic fungus).